The following is a 390-amino-acid chain: MAVSESQLKKMVSKYKYRDLTVRETVNVITLYKDLKPVLDSYVFNDGSSRELMNLTGTIPVPYRGNTYNIPICLWLLDTYPYNPPICFVKPTSSMTIKTGKHVDANGKIYLPYLHEWKHPQSDLLGLIQVMIVVFGDEPPVFSRPISASYPPYQATGPPNTSYMPGMPGGISPYPSGYPPNPSGYPGCPYPPGGPYPATTSSQYPSQPPVTTVGPSRDGTISEDTIRASLISAVSDKLRWRMKEEMDRAQAELNALKRTEEDLKKGHQKLEEMVTRLDQEVAEVDKNIELLKKKDEELSSALEKMENQSENNDIDEVIIPTAPLYKQILNLYAEENAIEDTIFYLGEALRRGVIDLDVFLKHVRLLSRKQFQLRALMQKARKTAGLSDLY.

The residue at position 2 (alanine 2) is an N-acetylalanine. The region spanning 2–145 (AVSESQLKKM…GDEPPVFSRP (144 aa)) is the UEV domain. Residues 158–162 (PPNTS) form an interaction with CEP55 region. Positions 198-214 (ATTSSQYPSQPPVTTVG) are enriched in polar residues. The segment at 198–220 (ATTSSQYPSQPPVTTVGPSRDGT) is disordered. A Phosphothreonine modification is found at threonine 220. The stretch at 235–316 (SDKLRWRMKE…NQSENNDIDE (82 aa)) forms a coiled coil. Residues 320-323 (PTAP) carry the PTAP motif motif. The region spanning 322–390 (APLYKQILNL…RKTAGLSDLY (69 aa)) is the SB domain.

The protein belongs to the ubiquitin-conjugating enzyme family. UEV subfamily. In terms of assembly, component of the ESCRT-I complex (endosomal sorting complex required for transport I) which consists of TSG101, VPS28, a VPS37 protein (VPS37A to -D) and MVB12A or MVB12B in a 1:1:1:1 stoichiometry. Interacts with VPS37A, VPS37B and VPS37C. Interacts with DMAP1. Interacts with ubiquitin. Interacts with stathmin, GMCL and AATF. Component of an ESCRT-I complex (endosomal sorting complex required for transport I) which consists of TSG101, VPS28, VPS37A and UBAP1 in a 1:1:1:1 stoichiometry. Interacts with HGS; the interaction mediates the association with the ESCRT-0 complex. Interacts with GGA1 and GGA3. Interacts (via UEV domain) with PDCD6IP/AIP1. Interacts with VPS28, SNF8 and VPS36. Self-associates. Interacts with MVB12A; the association appears to be mediated by the TSG101-VPS37 binary subcomplex. Interacts with VPS37D. Interacts with LRSAM1. Interacts with CEP55; the interaction is required for cytokinesis but not for viral budding. Interacts with PDCD6. Interacts with LITAF. Interacts with MGRN1. Interacts with ARRDC1; recruits TSG101 to the plasma membrane. As to quaternary structure, (Microbial infection) Interacts with HIV-1 p6. (Microbial infection) Interacts with human spumavirus Gag. In terms of assembly, (Microbial infection) Interacts with HTLV-1 Gag. As to quaternary structure, (Microbial infection) Interacts with Ebola virus VP40. (Microbial infection) Interacts with EIAV p9; the interaction has been shown in vitro. In terms of assembly, (Microbial infection) Interacts with Lassa virus protein Z. As to quaternary structure, (Microbial infection) Interacts with hepatitis E virus protein ORF3. Monoubiquitinated at multiple sites by LRSAM1 and by MGRN1. Ubiquitination inactivates it, possibly by regulating its shuttling between an active membrane-bound protein and an inactive soluble form. Ubiquitination by MGRN1 requires the presence of UBE2D1. Heart, brain, placenta, lung, liver, skeletal, kidney and pancreas.

It localises to the cytoplasm. It is found in the early endosome membrane. Its subcellular location is the late endosome membrane. The protein resides in the cytoskeleton. The protein localises to the microtubule organizing center. It localises to the centrosome. It is found in the midbody. Its subcellular location is the midbody ring. The protein resides in the nucleus. Functionally, component of the ESCRT-I complex, a regulator of vesicular trafficking process. Binds to ubiquitinated cargo proteins and is required for the sorting of endocytic ubiquitinated cargos into multivesicular bodies (MVBs). Mediates the association between the ESCRT-0 and ESCRT-I complex. Required for completion of cytokinesis; the function requires CEP55. May be involved in cell growth and differentiation. Acts as a negative growth regulator. Involved in the budding of many viruses through an interaction with viral proteins that contain a late-budding motif P-[ST]-A-P. This interaction is essential for viral particle budding of numerous retroviruses. Required for the exosomal release of SDCBP, CD63 and syndecan. It may also play a role in the extracellular release of microvesicles that differ from the exosomes. The chain is Tumor susceptibility gene 101 protein (TSG101) from Homo sapiens (Human).